A 568-amino-acid polypeptide reads, in one-letter code: Serine/threonine-protein kinase RIO1 (568 aa).

Disordered regions lie at residues 14 to 70 (GQFD…DDDW) and 83 to 109 (YVWN…STPA). Phosphoserine occurs at positions 21 and 22. Residues 24-38 (SENRDLKTVKEKDDI) show a composition bias toward basic and acidic residues. Residues 51–70 (GEGEIEDEEEEGYDDDDDDW) show a composition bias toward acidic residues. The span at 87 to 105 (GGSNPQANRQTSDSSSAKM) shows a compositional bias: polar residues. In terms of domain architecture, Protein kinase spans 180–479 (TEINGCISTG…TGLKKDLSGV (300 aa)). Lys208, Ser278, and Ile280 together coordinate ATP. The Proton acceptor role is filled by Asp324. Residues Asn329 and Asp341 each coordinate Mg(2+). Asp341 (4-aspartylphosphate intermediate) is an active-site residue. Positions 490–568 (VEERTCSDSE…EKTAKTKKGK (79 aa)) are disordered. Over residues 497-513 (DSEDIGSSECSDTDSEE) the composition is skewed to acidic residues. Residues 514–543 (QGDHARPKKHTTDPDIDKKERKKMVKEAQR) are compositionally biased toward basic and acidic residues. The segment covering 544–568 (EKRKNKIPKHVKKRKEKTAKTKKGK) has biased composition (basic residues).

Belongs to the protein kinase superfamily. RIO-type Ser/Thr kinase family. As to quaternary structure, associates with the precursor of the 40S ribosome subunit. Interacts (via its N-terminus) with PRMT5 (via its N-terminus). Interacts with WDR77. Found in a PRMT5 complex composed of PRMT5, WDR77 and RIOK1. Interacts (via its C-terminus) with NCL; this interaction targets NCL for PRTM5 methylation. It depends on Mg(2+) as a cofactor.

The protein resides in the cytoplasm. The protein localises to the cytosol. It catalyses the reaction L-seryl-[protein] + ATP = O-phospho-L-seryl-[protein] + ADP + H(+). It carries out the reaction L-threonyl-[protein] + ATP = O-phospho-L-threonyl-[protein] + ADP + H(+). The enzyme catalyses ATP + H2O = ADP + phosphate + H(+). Its function is as follows. Involved in the final steps of cytoplasmic maturation of the 40S ribosomal subunit. Involved in processing of 18S-E pre-rRNA to the mature 18S rRNA. Required for the recycling of NOB1 and PNO1 from the late 40S precursor. The association with the very late 40S subunit intermediate may involve a translation-like checkpoint point cycle preceeding the binding to the 60S ribosomal subunit. Despite the protein kinase domain is proposed to act predominantly as an ATPase. The catalytic activity regulates its dynamic association with the 40S subunit. In addition to its role in ribosomal biogenesis acts as an adapter protein by recruiting NCL/nucleolin the to PRMT5 complex for its symmetrical methylation. The polypeptide is Serine/threonine-protein kinase RIO1 (Homo sapiens (Human)).